The primary structure comprises 3301 residues: Cadherin EGF LAG seven-pass G-type receptor 3 (3301 aa).

Positions Met-1 to Glu-31 are cleaved as a signal peptide. At Glu-32–Ala-2531 the chain is on the extracellular side. 2 disordered regions span residues Leu-148 to Ser-189 and Lys-202 to Pro-314. Residues Met-267 to Arg-276 show a composition bias toward basic residues. 9 consecutive Cadherin domains span residues Pro-317 to Phe-424, Glu-425 to Phe-536, Ser-537 to Phe-642, Val-643 to Phe-747, Thr-748 to Phe-849, Gln-850 to Phe-952, Val-953 to Phe-1058, Pro-1059 to Leu-1160, and Asn-1161 to Ile-1257. Asn-623 carries N-linked (GlcNAc...) asparagine glycosylation. N-linked (GlcNAc...) asparagine glycosylation occurs at Asn-838. Residues Asn-1173, Asn-1213, Asn-1308, and Asn-1318 are each glycosylated (N-linked (GlcNAc...) asparagine). In terms of domain architecture, EGF-like 1; calcium-binding spans Asp-1366–Glu-1424. Intrachain disulfides connect Cys-1370–Cys-1381, Cys-1375–Cys-1412, Cys-1414–Cys-1423, Cys-1430–Cys-1441, Cys-1435–Cys-1450, Cys-1452–Cys-1459, Cys-1468–Cys-1479, Cys-1473–Cys-1489, and Cys-1491–Cys-1502. The 35-residue stretch at Glu-1426–Glu-1460 folds into the EGF-like 2; calcium-binding domain. In terms of domain architecture, EGF-like 3; calcium-binding spans Glu-1464–Glu-1503. Positions Val-1504–Cys-1708 constitute a Laminin G-like 1 domain. N-linked (GlcNAc...) asparagine glycans are attached at residues Asn-1638 and Asn-1702. 4 cysteine pairs are disulfide-bonded: Cys-1682-Cys-1708, Cys-1715-Cys-1726, Cys-1720-Cys-1735, and Cys-1737-Cys-1746. An EGF-like 4; calcium-binding domain is found at Lys-1711 to Arg-1747. Residues Ala-1751 to Cys-1933 enclose the Laminin G-like 2 domain. A glycan (N-linked (GlcNAc...) asparagine) is linked at Asn-1759. Cystine bridges form between Cys-1904–Cys-1933, Cys-1939–Cys-1950, Cys-1944–Cys-1959, Cys-1961–Cys-1970, Cys-1974–Cys-1985, Cys-1979–Cys-1997, Cys-1999–Cys-2008, Cys-2016–Cys-2029, and Cys-2031–Cys-2041. The 37-residue stretch at Val-1935–Val-1971 folds into the EGF-like 5; calcium-binding domain. Asp-1952 carries the post-translational modification (3R)-3-hydroxyaspartate. Residues Asp-1972–Gly-2002 form the EGF-like 6; calcium-binding domain. The region spanning Tyr-2003–Asn-2042 is the EGF-like 7; calcium-binding domain. N-linked (GlcNAc...) asparagine glycosylation occurs at Asn-2042. In terms of domain architecture, EGF-like 8; calcium-binding spans Thr-2044–Ala-2079. 5 disulfide bridges follow: Cys-2048-Cys-2063, Cys-2050-Cys-2066, Cys-2068-Cys-2078, Cys-2087-Cys-2096, and Cys-2099-Cys-2111. The Laminin EGF-like domain occupies Cys-2066–Val-2113. The residue at position 2115 (Tyr-2115) is a Phosphotyrosine. Residues Asn-2166, Asn-2185, Asn-2375, Asn-2465, and Asn-2497 are each glycosylated (N-linked (GlcNAc...) asparagine). The segment at Leu-2353–Leu-2388 is disordered. Over residues Pro-2355 to Ser-2383 the composition is skewed to low complexity. Residues Gln-2357–Glu-2521 enclose the GAIN-B domain. 2 cysteine pairs are disulfide-bonded: Cys-2471/Cys-2503 and Cys-2491/Cys-2505. Residues Cys-2471–Glu-2521 are GPS. A helical membrane pass occupies residues Val-2532–Leu-2552. The Cytoplasmic segment spans residues Leu-2553–Arg-2563. Residues Gly-2564–Ile-2584 form a helical membrane-spanning segment. The Extracellular portion of the chain corresponds to His-2585 to Leu-2592. Residues Cys-2593–Val-2613 traverse the membrane as a helical segment. At Gln-2614–Arg-2634 the chain is on the cytoplasmic side. The helical transmembrane segment at Phe-2635 to Asp-2655 threads the bilayer. Residues Pro-2656–Leu-2673 lie on the Extracellular side of the membrane. A helical transmembrane segment spans residues Ile-2674–Leu-2694. Residues Ala-2695–Arg-2716 are Cytoplasmic-facing. Residues Ser-2717–Asn-2737 traverse the membrane as a helical segment. The Extracellular segment spans residues His-2738–His-2744. Residues Tyr-2745 to Leu-2765 form a helical membrane-spanning segment. Topologically, residues Asn-2766 to Ser-3301 are cytoplasmic. Disordered stretches follow at residues Ser-2823–Asp-2844, Ala-2879–Arg-2919, and Ser-2969–Gly-2992. The segment covering Ala-2881–Leu-2891 has biased composition (acidic residues). Residues Thr-2910 to Arg-2919 are compositionally biased toward basic residues. Tyr-3042 bears the Phosphotyrosine mark. The tract at residues Ala-3083–Ser-3301 is disordered. Ser-3090 is subject to Phosphoserine. Over residues Ser-3094 to Gly-3111 the composition is skewed to basic and acidic residues. Low complexity-rich tracts occupy residues Ser-3168–Arg-3189 and Leu-3239–Ser-3261. Over residues Thr-3276 to Ser-3289 the composition is skewed to polar residues.

This sequence belongs to the G-protein coupled receptor 2 family. LN-TM7 subfamily. Expressed in the CNS and in the eye.

Its subcellular location is the cell membrane. In terms of biological role, receptor that may have an important role in cell/cell signaling during nervous system formation. The polypeptide is Cadherin EGF LAG seven-pass G-type receptor 3 (Celsr3) (Mus musculus (Mouse)).